Reading from the N-terminus, the 379-residue chain is Diaminopimelate decarboxylase (379 aa).

The residue at position 48 (lysine 48) is an N6-(pyridoxal phosphate)lysine. Pyridoxal 5'-phosphate is bound by residues glycine 214 and glutamate 242 to arginine 245. Arginine 245, arginine 280, and tyrosine 284 together coordinate substrate. Catalysis depends on cysteine 309, which acts as the Proton donor. Glutamate 310 and tyrosine 338 together coordinate substrate. Tyrosine 338 provides a ligand contact to pyridoxal 5'-phosphate.

It belongs to the Orn/Lys/Arg decarboxylase class-II family. LysA subfamily. In terms of assembly, homodimer. Pyridoxal 5'-phosphate is required as a cofactor.

The catalysed reaction is meso-2,6-diaminopimelate + H(+) = L-lysine + CO2. The protein operates within amino-acid biosynthesis; L-lysine biosynthesis via DAP pathway; L-lysine from DL-2,6-diaminopimelate: step 1/1. Its function is as follows. Specifically catalyzes the decarboxylation of meso-diaminopimelate (meso-DAP) to L-lysine. The protein is Diaminopimelate decarboxylase of Deinococcus radiodurans (strain ATCC 13939 / DSM 20539 / JCM 16871 / CCUG 27074 / LMG 4051 / NBRC 15346 / NCIMB 9279 / VKM B-1422 / R1).